The sequence spans 143 residues: Probable cyclic pyranopterin monophosphate synthase (143 aa).

Residues 61–63 (YCH) and 97–98 (ME) each bind substrate. D112 is a catalytic residue.

The protein belongs to the MoaC family. In terms of assembly, homohexamer; trimer of dimers.

It carries out the reaction (8S)-3',8-cyclo-7,8-dihydroguanosine 5'-triphosphate = cyclic pyranopterin phosphate + diphosphate. It functions in the pathway cofactor biosynthesis; molybdopterin biosynthesis. Its function is as follows. Catalyzes the conversion of (8S)-3',8-cyclo-7,8-dihydroguanosine 5'-triphosphate to cyclic pyranopterin monophosphate (cPMP). The polypeptide is Probable cyclic pyranopterin monophosphate synthase (Thermoplasma acidophilum (strain ATCC 25905 / DSM 1728 / JCM 9062 / NBRC 15155 / AMRC-C165)).